The chain runs to 401 residues: Subtilisin-like protease 7 (401 aa).

The N-terminal stretch at 1–20 (MGFITKAIPLALAAASVING) is a signal peptide. Positions 21–119 (AEILETRAGV…IERDARVQIN (99 aa)) are excised as a propeptide. In terms of domain architecture, Inhibitor I9 spans 36–118 (KYIVVMNDGM…YIERDARVQI (83 aa)). The N-linked (GlcNAc...) asparagine glycan is linked to N58. Residues 129 to 401 (SWGLARVGSR…SKLINNGSGM (273 aa)) form the Peptidase S8 domain. Residues D161 and H193 each act as charge relay system in the active site. 2 N-linked (GlcNAc...) asparagine glycosylation sites follow: N223 and N253. Catalysis depends on S347, which acts as the Charge relay system. N397 carries N-linked (GlcNAc...) asparagine glycosylation.

Belongs to the peptidase S8 family.

Its subcellular location is the secreted. Its function is as follows. Secreted subtilisin-like serine protease with keratinolytic activity that contributes to pathogenicity. The protein is Subtilisin-like protease 7 (SUB7) of Trichophyton tonsurans (Scalp ringworm fungus).